The sequence spans 360 residues: Dual-specificity RNA methyltransferase RlmN (360 aa).

The active-site Proton acceptor is Glu93. A Radical SAM core domain is found at 99–326 (EEDRNTLCIS…VITRSSRGAD (228 aa)). Residues Cys106 and Cys331 are joined by a disulfide bond. Residues Cys113, Cys117, and Cys120 each contribute to the [4Fe-4S] cluster site. Residues 158–159 (GE), Ser190, 212–214 (SLN), and Asn288 each bind S-adenosyl-L-methionine. The active-site S-methylcysteine intermediate is Cys331.

It belongs to the radical SAM superfamily. RlmN family. [4Fe-4S] cluster is required as a cofactor.

It localises to the cytoplasm. The catalysed reaction is adenosine(2503) in 23S rRNA + 2 reduced [2Fe-2S]-[ferredoxin] + 2 S-adenosyl-L-methionine = 2-methyladenosine(2503) in 23S rRNA + 5'-deoxyadenosine + L-methionine + 2 oxidized [2Fe-2S]-[ferredoxin] + S-adenosyl-L-homocysteine. It catalyses the reaction adenosine(37) in tRNA + 2 reduced [2Fe-2S]-[ferredoxin] + 2 S-adenosyl-L-methionine = 2-methyladenosine(37) in tRNA + 5'-deoxyadenosine + L-methionine + 2 oxidized [2Fe-2S]-[ferredoxin] + S-adenosyl-L-homocysteine. Functionally, specifically methylates position 2 of adenine 2503 in 23S rRNA and position 2 of adenine 37 in tRNAs. m2A2503 modification seems to play a crucial role in the proofreading step occurring at the peptidyl transferase center and thus would serve to optimize ribosomal fidelity. In Geobacter sulfurreducens (strain ATCC 51573 / DSM 12127 / PCA), this protein is Dual-specificity RNA methyltransferase RlmN.